Here is a 427-residue protein sequence, read N- to C-terminus: Putative tyrosine recombinase XerC (427 aa).

A Core-binding (CB) domain is found at 1 to 81 (MTPQQLTEEY…HLRTIWGYAI (81 aa)). Residues 116–305 (RARSWLSMQV…DYDHMRAVLH (190 aa)) enclose the Tyr recombinase domain. Residues Arg-156, Lys-183, His-256, Arg-259, and His-283 contribute to the active site. Tyr-292 serves as the catalytic O-(3'-phospho-DNA)-tyrosine intermediate. 2 disordered regions span residues 323 to 384 (SGSP…PPDT) and 401 to 427 (RAAT…DSLA). Basic and acidic residues predominate over residues 350 to 362 (ARTEPSEPREHTQ). A compositionally biased stretch (low complexity) spans 402–413 (AATASAVPAATS).

The protein belongs to the 'phage' integrase family.

The protein resides in the cytoplasm. Functionally, site-specific tyrosine recombinase, which acts by catalyzing the cutting and rejoining of the recombining DNA molecules. This Pseudomonas aeruginosa protein is Putative tyrosine recombinase XerC.